A 272-amino-acid polypeptide reads, in one-letter code: Tumor necrosis factor receptor superfamily member 4 (272 aa).

An N-terminal signal peptide occupies residues Met1–Gly19. Residues Val20–Pro211 lie on the Extracellular side of the membrane. TNFR-Cys repeat units follow at residues Asn26–His61 and Pro62–Cys103. Disulfide bonds link Cys27-Cys38, Cys39-Cys52, Cys42-Cys60, Cys63-Cys77, Cys80-Cys95, Cys83-Cys103, Cys105-Cys123, and Cys126-Cys139. The stretch at Arg104–Val124 is one TNFR-Cys 3; truncated repeat. The TNFR-Cys 4 repeat unit spans residues Pro125–Glu165. A glycan (N-linked (GlcNAc...) asparagine) is linked at Asn144. A disulfide bond links Cys145 and Cys164. The helical transmembrane segment at Ala212–Leu236 threads the bilayer. The Cytoplasmic portion of the chain corresponds to Arg237–Ile272.

As to quaternary structure, interacts with TRAF2, TRAF3 and TRAF5. Expressed in CD4(+) T-cells and in T-helper Th17 cells (at protein level).

The protein localises to the membrane. Receptor for TNFSF4/OX40L/GP34. Is a costimulatory molecule implicated in long-term T-cell immunity. This chain is Tumor necrosis factor receptor superfamily member 4 (Tnfrsf4), found in Mus musculus (Mouse).